The primary structure comprises 437 residues: Glutamate-1-semialdehyde 2,1-aminomutase (437 aa).

Position 273 is an N6-(pyridoxal phosphate)lysine (Lys273).

It belongs to the class-III pyridoxal-phosphate-dependent aminotransferase family. HemL subfamily. In terms of assembly, homodimer. Pyridoxal 5'-phosphate is required as a cofactor.

It localises to the cytoplasm. The catalysed reaction is (S)-4-amino-5-oxopentanoate = 5-aminolevulinate. Its pathway is porphyrin-containing compound metabolism; protoporphyrin-IX biosynthesis; 5-aminolevulinate from L-glutamyl-tRNA(Glu): step 2/2. In Chlamydia abortus (strain DSM 27085 / S26/3) (Chlamydophila abortus), this protein is Glutamate-1-semialdehyde 2,1-aminomutase.